The following is a 116-amino-acid chain: Alpha-defensin 29 (116 aa).

Residues 1–19 (MKTLVLLSALVLPCFQVQA) form the signal peptide. A propeptide spanning residues 20–60 (DPIQNTDEETKTEEQPEEEDQAVSVSFGGTEGSALQDVAQR) is cleaved from the precursor. Residues 22–44 (IQNTDEETKTEEQPEEEDQAVSV) are disordered. 9 repeat units span residues 65-67 (CRK), 68-70 (CRV), 71-73 (CQK), 74-76 (CQV), 77-79 (CQK), 80-82 (CPV), 83-85 (CPT), 86-88 (CPQ), and 89-91 (CPK). Positions 65–70 (CRKCRV) are 2 X 3 AA tandem repeats of C-R-X. The tract at residues 71–79 (CQKCQVCQK) is 3 X 3 AA tandem repeats of C-Q-X. The tract at residues 80-91 (CPVCPTCPQCPK) is 4 X 3 AA tandem repeats of C-P-X.

This sequence belongs to the alpha-defensin family. In terms of tissue distribution, small bowel.

It is found in the secreted. Its function is as follows. Apparent precursor of a secreted, cationic, proline- and cysteine-rich peptide that contains Cys-Pro-Xaa repeats. Unlike cryptdin, the proposed mature peptide region lacks the structural motif characteristic of defensins. This Mus musculus (Mouse) protein is Alpha-defensin 29.